Here is a 57-residue protein sequence, read N- to C-terminus: Large ribosomal subunit protein bL32 (57 aa).

Residues 1–19 (MATPKRRMSRANTRSRRSQ) are compositionally biased toward basic residues. The disordered stretch occupies residues 1–21 (MATPKRRMSRANTRSRRSQWK).

The protein belongs to the bacterial ribosomal protein bL32 family.

This is Large ribosomal subunit protein bL32 from Mycobacterium ulcerans (strain Agy99).